Here is a 153-residue protein sequence, read N- to C-terminus: 3-hydroxyacyl-[acyl-carrier-protein] dehydratase FabZ (153 aa).

Residue His-58 is part of the active site.

The protein belongs to the thioester dehydratase family. FabZ subfamily.

It localises to the cytoplasm. It carries out the reaction a (3R)-hydroxyacyl-[ACP] = a (2E)-enoyl-[ACP] + H2O. In terms of biological role, involved in unsaturated fatty acids biosynthesis. Catalyzes the dehydration of short chain beta-hydroxyacyl-ACPs and long chain saturated and unsaturated beta-hydroxyacyl-ACPs. The chain is 3-hydroxyacyl-[acyl-carrier-protein] dehydratase FabZ from Bradyrhizobium diazoefficiens (strain JCM 10833 / BCRC 13528 / IAM 13628 / NBRC 14792 / USDA 110).